The chain runs to 199 residues: ATP-dependent Clp protease proteolytic subunit (199 aa).

Ser102 functions as the Nucleophile in the catalytic mechanism. Residue His127 is part of the active site.

It belongs to the peptidase S14 family. As to quaternary structure, fourteen ClpP subunits assemble into 2 heptameric rings which stack back to back to give a disk-like structure with a central cavity, resembling the structure of eukaryotic proteasomes.

It is found in the cytoplasm. It catalyses the reaction Hydrolysis of proteins to small peptides in the presence of ATP and magnesium. alpha-casein is the usual test substrate. In the absence of ATP, only oligopeptides shorter than five residues are hydrolyzed (such as succinyl-Leu-Tyr-|-NHMec, and Leu-Tyr-Leu-|-Tyr-Trp, in which cleavage of the -Tyr-|-Leu- and -Tyr-|-Trp bonds also occurs).. Cleaves peptides in various proteins in a process that requires ATP hydrolysis. Has a chymotrypsin-like activity. Plays a major role in the degradation of misfolded proteins. This is ATP-dependent Clp protease proteolytic subunit from Pseudothermotoga lettingae (strain ATCC BAA-301 / DSM 14385 / NBRC 107922 / TMO) (Thermotoga lettingae).